We begin with the raw amino-acid sequence, 611 residues long: Zinc metalloproteinase-disintegrin-like MTP9 (611 aa).

Positions 1-20 are cleaved as a signal peptide; that stretch reads MIEVLLVTICFTVFPYQGSS. A propeptide spanning residues 21-191 is cleaved from the precursor; it reads IILESGNVND…DEPIEKISQL (171 aa). Positions 205-401 constitute a Peptidase M12B domain; it reads KYIELYVVVD…VRPQCILNKP (197 aa). A Ca(2+)-binding site is contributed by glutamate 208. Asparagine 282 carries an N-linked (GlcNAc...) asparagine glycan. Aspartate 292 lines the Ca(2+) pocket. Cystine bridges form between cysteine 316-cysteine 396, cysteine 356-cysteine 380, and cysteine 358-cysteine 363. 3 residues coordinate Zn(2+): histidine 341, histidine 345, and histidine 351. Residues cysteine 396, asparagine 399, asparagine 414, phenylalanine 416, glutamate 418, glutamate 421, and aspartate 424 each contribute to the Ca(2+) site. In terms of domain architecture, Disintegrin spans 409–493; the sequence is PPVCGNYFVE…ECPTDSFQRN (85 aa). 15 disulfide bridges follow: cysteine 412–cysteine 441, cysteine 423–cysteine 436, cysteine 425–cysteine 431, cysteine 435–cysteine 456, cysteine 447–cysteine 453, cysteine 452–cysteine 478, cysteine 465–cysteine 485, cysteine 472–cysteine 504, cysteine 497–cysteine 509, cysteine 516–cysteine 566, cysteine 531–cysteine 573, cysteine 541–cysteine 575, cysteine 544–cysteine 554, cysteine 561–cysteine 599, and cysteine 593–cysteine 604. The D/ECD-tripeptide motif lies at 471–473; sequence DCD. Residues aspartate 473, leucine 474, glutamate 476, and aspartate 488 each coordinate Ca(2+). Residues asparagine 548 and asparagine 570 are each glycosylated (N-linked (GlcNAc...) asparagine).

This sequence belongs to the venom metalloproteinase (M12B) family. P-III subfamily. Monomer. Zn(2+) serves as cofactor. Expressed by the venom gland.

It localises to the secreted. Functionally, snake venom zinc metalloproteinase that may impair hemostasis in the prey. The chain is Zinc metalloproteinase-disintegrin-like MTP9 from Drysdalia coronoides (White-lipped snake).